Here is a 177-residue protein sequence, read N- to C-terminus: Large ribosomal subunit protein uL6 (177 aa).

The protein belongs to the universal ribosomal protein uL6 family. Part of the 50S ribosomal subunit.

Functionally, this protein binds to the 23S rRNA, and is important in its secondary structure. It is located near the subunit interface in the base of the L7/L12 stalk, and near the tRNA binding site of the peptidyltransferase center. This Pectobacterium carotovorum subsp. carotovorum (strain PC1) protein is Large ribosomal subunit protein uL6.